Here is a 1019-residue protein sequence, read N- to C-terminus: Photoactivated adenylate cyclase subunit alpha-like protein ST- (1019 aa).

One can recognise a BLUF 1 domain in the interval 55 to 148; that stretch reads LRRLMYLSAS…GRMYGEWHMK (94 aa). One can recognise a Guanylate cyclase 1 domain in the interval 204–332; the sequence is VLTFIYLVEF…DCINTASRIT (129 aa). Positions 467–559 constitute a BLUF 2 domain; sequence LITLTYISQA…RVYGTPLDMT (93 aa). The 130-residue stretch at 615–744 folds into the Guanylate cyclase 2 domain; sequence VMLATDICSF…EVSARVMAVE (130 aa). 3 disordered regions span residues 801-846, 887-923, and 963-993; these read EDHL…TRPH, QIAA…DQPA, and EGHR…NRAT. Over residues 821–834 the composition is skewed to basic residues; sequence RHQRPGPGRPRRGH.

Belongs to the adenylyl cyclase class-4/guanylyl cyclase family. In terms of assembly, heterotetramer of two alpha and two beta subunits.

Its subcellular location is the cell projection. It is found in the cilium. It localises to the flagellum. The polypeptide is Photoactivated adenylate cyclase subunit alpha-like protein ST- (Euglena gracilis).